The chain runs to 119 residues: MPRVKRGVTARARHKKVLALAKGFRGRRGNVFRIAKQAVMKAGQYAYRDRRTKKRVFRQLWIARINAAARELGLTYSQFANGLKKASIEIDRKMLADLAVHDKAAFGSIVEQVKAKLAA.

The protein belongs to the bacterial ribosomal protein bL20 family.

Functionally, binds directly to 23S ribosomal RNA and is necessary for the in vitro assembly process of the 50S ribosomal subunit. It is not involved in the protein synthesizing functions of that subunit. In Acidovorax sp. (strain JS42), this protein is Large ribosomal subunit protein bL20.